Consider the following 247-residue polypeptide: tRNA uridine(34) hydroxylase (247 aa).

The 95-residue stretch at Thr124–Asn218 folds into the Rhodanese domain. Catalysis depends on Cys178, which acts as the Cysteine persulfide intermediate.

The protein belongs to the TrhO family.

It catalyses the reaction uridine(34) in tRNA + AH2 + O2 = 5-hydroxyuridine(34) in tRNA + A + H2O. Its function is as follows. Catalyzes oxygen-dependent 5-hydroxyuridine (ho5U) modification at position 34 in tRNAs. This is tRNA uridine(34) hydroxylase from Rickettsia rickettsii (strain Iowa).